Reading from the N-terminus, the 501-residue chain is Sugar phosphate exchanger 3 (501 aa).

Residues 20–40 (CTHHHIVVFLLTFFSYSLLHA) traverse the membrane as a helical segment. Residue N62 is glycosylated (N-linked (GlcNAc...) asparagine). The next 5 helical transmembrane spans lie at 87–107 (TLFL…GLFV), 119–139 (WVLS…GTLT), 153–173 (LWVV…AVMG), 183–203 (FVFG…AFLA), and 214–234 (AFLV…CGLL). N-linked (GlcNAc...) asparagine glycosylation is present at N273. 6 consecutive transmembrane segments (helical) span residues 298 to 320 (GVVL…FFWL), 340 to 360 (IWYD…SDVL), 364 to 384 (APVL…YSRS), 393 to 413 (VIMA…SSAI), 435 to 455 (GIVD…VSLI), and 459 to 479 (LGWM…ILFI).

The protein belongs to the major facilitator superfamily. Organophosphate:Pi antiporter (OPA) (TC 2.A.1.4) family.

The protein resides in the endoplasmic reticulum membrane. It localises to the lysosome membrane. Unlike the other SLC37 members, seems to lack glucose-6-phosphate antiporter activity. This chain is Sugar phosphate exchanger 3 (SLC37A3), found in Gallus gallus (Chicken).